The following is a 259-amino-acid chain: Insulin-induced gene 1 protein (259 aa).

Topologically, residues Met-1–Leu-66 are cytoplasmic. The interval Pro-33–Ala-57 is disordered. A helical transmembrane segment spans residues Val-67 to Ile-89. Topologically, residues Gln-90–Ala-108 are extracellular. A helical transmembrane segment spans residues Trp-109–Tyr-126. At Pro-127–Arg-141 the chain is on the cytoplasmic side. Residues Lys-138 and Lys-140 each participate in a glycyl lysine isopeptide (Lys-Gly) (interchain with G-Cter in ubiquitin) cross-link. A helical transmembrane segment spans residues Glu-142–Asp-164. At Phe-165 to Asn-167 the chain is on the extracellular side. The chain crosses the membrane as a helical span at residues Asn-168 to Phe-186. Residues Asp-187–Ser-191 lie on the Cytoplasmic side of the membrane. A Phosphoserine modification is found at Ser-189. Residues Gly-192–Asn-213 form a helical membrane-spanning segment. Residues Gly-214 to Arg-227 are Extracellular-facing. A helical membrane pass occupies residues Ser-228 to Gly-245. Residues Arg-246 to Asp-259 are Cytoplasmic-facing. A KxHxx motif is present at residues Pro-253–Asp-259.

The protein belongs to the INSIG family. In terms of assembly, interacts with SCAP; interaction is direct and only takes place in the presence of sterols; it prevents interaction between SCAP and the coat protein complex II (COPII). Associates with the SCAP-SREBP complex (composed of SCAP and SREBF1/SREBP1 or SREBF2/SREBP2); association is mediated via its interaction with SCAP and only takes place in the presence of sterols. Interaction with SCAP is mutually exclusive with PAQR3. Interacts with HMGCR (via its SSD); the interaction, accelerated by sterols, leads to the recruitment of HMGCR to AMFR/gp78 for its ubiquitination by the sterol-mediated ERAD pathway. Interacts with AMFR/gp78 (via its membrane domain); the interaction recruits HMCR at the ER membrane for its ubiquitination and degradation by the sterol-mediated ERAD pathway. Interacts with SOAT2/ACAT2; leading to promote recruitment of AMFR/gp78 and subsequent ubiquitination of SOAT2/ACAT2. Interacts with RNF139. Interacts with RNF145. Post-translationally, phosphorylation at Ser-189 by PCK1 reduces binding to oxysterol, disrupting the interaction between INSIG1 and SCAP, thereby promoting nuclear translocation of SREBP proteins (SREBF1/SREBP1 or SREBF2/SREBP2) and subsequent transcription of downstream lipogenesis-related genes. Ubiquitinated by AMFR/gp78 in response to sterol deprivation, leading to its degradation: when the SCAP-SREBP complex becomes dissociated from INSIG1, INSIG1 is then ubiquitinated and degraded in proteasomes. Although ubiquitination is required for rapid INSIG1 degradation, it is not required for release of the SCAP-SREBP complex. Ubiquitinated by RNF139. In terms of tissue distribution, highly expressed in liver and kidney.

It localises to the endoplasmic reticulum membrane. In terms of biological role, oxysterol-binding protein that mediates feedback control of cholesterol synthesis by controlling both endoplasmic reticulum to Golgi transport of SCAP and degradation of HMGCR. Acts as a negative regulator of cholesterol biosynthesis by mediating the retention of the SCAP-SREBP complex in the endoplasmic reticulum, thereby blocking the processing of sterol regulatory element-binding proteins (SREBPs) SREBF1/SREBP1 and SREBF2/SREBP2. Binds oxysterol, including 25-hydroxycholesterol, regulating interaction with SCAP and retention of the SCAP-SREBP complex in the endoplasmic reticulum. In presence of oxysterol, interacts with SCAP, retaining the SCAP-SREBP complex in the endoplasmic reticulum, thereby preventing SCAP from escorting SREBF1/SREBP1 and SREBF2/SREBP2 to the Golgi. Sterol deprivation or phosphorylation by PCK1 reduce oxysterol-binding, disrupting the interaction between INSIG1 and SCAP, thereby promoting Golgi transport of the SCAP-SREBP complex, followed by processing and nuclear translocation of SREBF1/SREBP1 and SREBF2/SREBP2. Also regulates cholesterol synthesis by regulating degradation of HMGCR: initiates the sterol-mediated ubiquitin-mediated endoplasmic reticulum-associated degradation (ERAD) of HMGCR via recruitment of the reductase to the ubiquitin ligases AMFR/gp78 and/or RNF139. Also regulates degradation of SOAT2/ACAT2 when the lipid levels are low: initiates the ubiquitin-mediated degradation of SOAT2/ACAT2 via recruitment of the ubiquitin ligases AMFR/gp78. This chain is Insulin-induced gene 1 protein, found in Rattus norvegicus (Rat).